The primary structure comprises 101 residues: Small ribosomal subunit protein bS18c (101 aa).

Positions 1–19 (MNKSKRPFTKSKRSFRRRL) are enriched in basic residues. The tract at residues 1–23 (MNKSKRPFTKSKRSFRRRLPPIQ) is disordered.

The protein belongs to the bacterial ribosomal protein bS18 family. Part of the 30S ribosomal subunit.

The protein resides in the plastid. The protein localises to the chloroplast. This chain is Small ribosomal subunit protein bS18c, found in Lobularia maritima (Sweet alyssum).